Here is a 487-residue protein sequence, read N- to C-terminus: Alpha-1,4-L-rhamnosidase (487 aa).

The N-terminal stretch at 1–30 is a signal peptide; it reads MKNKKRLCHILKYIITCFLFGVIFIIPIQA. Residue glutamate 199 is the Proton donor of the active site.

It belongs to the glycosyl hydrolase 39 family.

It is found in the periplasm. Functionally, alpha-rhamnosidase involved in ulvan degradation. Ulvan is the main polysaccharide component of the Ulvales (green seaweed) cell wall. It is composed of disaccharide building blocks comprising 3-sulfated rhamnose (Rha3S) linked to D-glucuronic acid (GlcA), L-iduronic acid (IduA), or D-xylose (Xyl). Endo-acting alpha-1,4-L-rhamnosidase cleaves rhamnose sections interspersed between xylose residues within the polymer, degrading larger oligomers with consecutive Xyl-Rha3S units that are resistant to the ulvan lyases and producing dimers Xyl-Rha3S and Xyl2S-Rha3S as the smallest products. The chain is Alpha-1,4-L-rhamnosidase from Formosa agariphila (strain DSM 15362 / KCTC 12365 / LMG 23005 / KMM 3901 / M-2Alg 35-1).